The primary structure comprises 234 residues: Ribosomal RNA small subunit methyltransferase G (234 aa).

S-adenosyl-L-methionine is bound by residues glycine 74, phenylalanine 79, 125–126, and arginine 144; that span reads AE.

The protein belongs to the methyltransferase superfamily. RNA methyltransferase RsmG family.

The protein localises to the cytoplasm. Functionally, specifically methylates the N7 position of a guanine in 16S rRNA. This is Ribosomal RNA small subunit methyltransferase G from Roseiflexus castenholzii (strain DSM 13941 / HLO8).